The sequence spans 447 residues: N-succinylarginine dihydrolase (447 aa).

Residues 19–28 (AGLSFGNEAS), Asn-110, and 137–138 (HR) contribute to the substrate site. The active site involves Glu-174. Residue Arg-212 coordinates substrate. The active site involves His-248. Substrate-binding residues include Asp-250 and Asn-359. The active-site Nucleophile is the Cys-365.

This sequence belongs to the succinylarginine dihydrolase family. As to quaternary structure, homodimer.

The enzyme catalyses N(2)-succinyl-L-arginine + 2 H2O + 2 H(+) = N(2)-succinyl-L-ornithine + 2 NH4(+) + CO2. It participates in amino-acid degradation; L-arginine degradation via AST pathway; L-glutamate and succinate from L-arginine: step 2/5. In terms of biological role, catalyzes the hydrolysis of N(2)-succinylarginine into N(2)-succinylornithine, ammonia and CO(2). In Salmonella schwarzengrund (strain CVM19633), this protein is N-succinylarginine dihydrolase.